An 807-amino-acid polypeptide reads, in one-letter code: Glycerol-3-phosphate acyltransferase (807 aa).

Positions 308-313 match the HXXXXD motif motif; sequence CHRSHM.

Belongs to the GPAT/DAPAT family.

Its subcellular location is the cell inner membrane. It carries out the reaction sn-glycerol 3-phosphate + an acyl-CoA = a 1-acyl-sn-glycero-3-phosphate + CoA. Its pathway is phospholipid metabolism; CDP-diacylglycerol biosynthesis; CDP-diacylglycerol from sn-glycerol 3-phosphate: step 1/3. The polypeptide is Glycerol-3-phosphate acyltransferase (Shewanella sp. (strain MR-7)).